A 148-amino-acid chain; its full sequence is Gas vesicle protein J (148 aa).

2 disordered regions span residues 1–21 (MTTTPIHPTRPQTNSNRVIPT) and 118–148 (EETTLTANNPEDLQPMYEVNSQEGDNSQLEA). Residues 136–148 (VNSQEGDNSQLEA) show a composition bias toward polar residues.

It belongs to the gas vesicle GvpA family. Interacts with GvpA.

It is found in the gas vesicle. Functionally, a minor component of the gas vesicle, might be involved in nucleating gas vesicle formation. Gas vesicles (GV) are hollow, gas filled proteinaceous nanostructures. During planktonic growth they allow positioning of the organism at a favorable depth for light or nutrient acquisition. Cluster expression in E.coli (gvpA1-gvpA2-gvpC-gvpN-gvpJ-gvpK-gvpF-gvpG-gvpV-gvpW) allows cells to float and produces irregularly shaped gas vesicles. The protein is Gas vesicle protein J of Nostoc sp. (strain PCC 7120 / SAG 25.82 / UTEX 2576).